The sequence spans 281 residues: Ribosomal RNA large subunit methyltransferase J (281 aa).

Residues His19, His42, Ser101, Glu119, 144–145 (NG), and Asp165 contribute to the S-adenosyl-L-methionine site. Asp165 serves as the catalytic Proton acceptor.

It belongs to the RlmJ family. In terms of assembly, monomer.

The enzyme catalyses adenosine(2030) in 23S rRNA + S-adenosyl-L-methionine = N(6)-methyladenosine(2030) in 23S rRNA + S-adenosyl-L-homocysteine + H(+). Functionally, specifically methylates the adenine in position 2030 of 23S rRNA. The sequence is that of Ribosomal RNA large subunit methyltransferase J from Haemophilus influenzae (strain ATCC 51907 / DSM 11121 / KW20 / Rd).